A 360-amino-acid chain; its full sequence is Phospho-N-acetylmuramoyl-pentapeptide-transferase (360 aa).

10 helical membrane-spanning segments follow: residues 26-46, 72-92, 94-114, 132-152, 168-188, 199-219, 236-256, 263-283, 288-308, and 338-358; these read AIVS…RMIA, PTMG…LWAY, SNPY…IGFV, WKYF…YLAG, VMPQ…VGTG, GLAI…AWAT, AGEL…FLWF, VFMG…IAVL, FLLV…ILQV, and VIVR…ATLK.

It belongs to the glycosyltransferase 4 family. MraY subfamily. Mg(2+) serves as cofactor.

The protein localises to the cell inner membrane. The catalysed reaction is UDP-N-acetyl-alpha-D-muramoyl-L-alanyl-gamma-D-glutamyl-meso-2,6-diaminopimeloyl-D-alanyl-D-alanine + di-trans,octa-cis-undecaprenyl phosphate = di-trans,octa-cis-undecaprenyl diphospho-N-acetyl-alpha-D-muramoyl-L-alanyl-D-glutamyl-meso-2,6-diaminopimeloyl-D-alanyl-D-alanine + UMP. The protein operates within cell wall biogenesis; peptidoglycan biosynthesis. In terms of biological role, catalyzes the initial step of the lipid cycle reactions in the biosynthesis of the cell wall peptidoglycan: transfers peptidoglycan precursor phospho-MurNAc-pentapeptide from UDP-MurNAc-pentapeptide onto the lipid carrier undecaprenyl phosphate, yielding undecaprenyl-pyrophosphoryl-MurNAc-pentapeptide, known as lipid I. The sequence is that of Phospho-N-acetylmuramoyl-pentapeptide-transferase from Enterobacter sp. (strain 638).